The following is a 178-amino-acid chain: MSRILKRIAAGVVIAGVAALLLAAGGYAAGARVNTTKSIPVGLYWTSSAPVEKGAYVLFCPPQLGVFDDAKERGYIGAGFCQGGYGYMMKRVLAAKDDAVAVADDGVRVNGELLPLSAPIKADKAGRPLPRYQSNSYTLGNSEVLLMSDVSATSFDGRYFGPINRSQIKTVIRPVITW.

The signal sequence occupies residues 1–30 (MSRILKRIAAGVVIAGVAALLLAAGGYAAG).

The protein belongs to the peptidase S26C family.

The protein resides in the periplasm. Functionally, required for donor-specific phage sensitivity. May be involved in pilus assembly. The sequence is that of Plasmid transfer protein TraF (traF) from Escherichia coli.